Reading from the N-terminus, the 968-residue chain is MKSQNNKEYKSEFSYKETLNLLKTDFSMRANSVLREPEIQNFWAKNNIDFELGSNNSGKIFTLHDGPPYANGALHMGHALNKVLKDIINKYKTLRGFRVHYVPGWDCHGLPIELKVLQNLKSSERKNLDTLNLRKKATDYAYVQINNQMEGFKRWGIWGNWDNPYLTLKKSYESAQIGVFGKMFLNGYIYRGLKPVHWSPSSRTALAEAELEYPDEHYSKSIYVSLKITKLSDEILLKFYQENPNFKKDFFLSNSFITIWTTTPWTIPANEAVAVNPKINYVFAIDEEKRIYLLAKELSSEISNKFNKDLTTLLEVKGVTLEDIEYQHPTKNKNCRIVIGGDYITIESGTGIVHTAPGHGIDDFNVGRKYDLPTTCVVDEKGNLNEYSGQFQGSNVLKDANDLIIDYLEEKDLLLLQENYKHRYPYDWRTKKPTIFRATEQWFASVNGFRSSALKAIEDVEWIPATGKKRIYSMVVGRGDWCISRQRSWGLPIPVFYKKNGNEILLNSEIINHIQKLFSEHGADIWWDWDVKHLLPDNYVKESDLWKKGTDTMDVWFDSGSSWAAVCEQRSELKYPADLYLEGSDQHRGWFQSSLLTSVAVNNKPPYKKVLTHGFALDENGRKMSKSLGNVVDPNIIINGGNNKKIEPAYGADVLRLWVSSVDYSVDVPIGSNILKQLSDVYRKVRNTARYLLGNIHDYDPNIDSFEIDQLPLLDQWMLGRLVEVTDQISNAYENYEFSKFFQILQSFCVVDLSNFYLDIAKDRLYVSSKSQFRRRSCQFVMSKVVENLAVLISPVLCHMAEDIWQNVPYSTKEKSVFQRGWPNFSQSWKNEILNEHIANLRNLRVEINKAIEGCRNKQIIGAALETEVNYLPKDKVVKDSLTWLKKFGNEEVDLFRDWLIVSNFQVVSELAKNSLIIDNNEIGKIQILKAHGQKCDRCWHYQEEIFSGIQNTKLCKRCSHIINLEFT.

The 'HIGH' region signature appears at 68–78 (PYANGALHMGH). L-isoleucyl-5'-AMP is bound at residue E582. The 'KMSKS' region signature appears at 623–627 (KMSKS). K626 lines the ATP pocket. Zn(2+) is bound by residues C936, C939, C956, and C959.

This sequence belongs to the class-I aminoacyl-tRNA synthetase family. IleS type 1 subfamily. In terms of assembly, monomer. Zn(2+) is required as a cofactor.

Its subcellular location is the cytoplasm. The enzyme catalyses tRNA(Ile) + L-isoleucine + ATP = L-isoleucyl-tRNA(Ile) + AMP + diphosphate. Its function is as follows. Catalyzes the attachment of isoleucine to tRNA(Ile). As IleRS can inadvertently accommodate and process structurally similar amino acids such as valine, to avoid such errors it has two additional distinct tRNA(Ile)-dependent editing activities. One activity is designated as 'pretransfer' editing and involves the hydrolysis of activated Val-AMP. The other activity is designated 'posttransfer' editing and involves deacylation of mischarged Val-tRNA(Ile). This chain is Isoleucine--tRNA ligase, found in Prochlorococcus marinus (strain MIT 9312).